The primary structure comprises 184 residues: MHKIVFVTGNKGKFAEIRDILKTFGIEVIQEKNGYPELQEDELEPIAAHGAQYVANKLNMPVMVDDSGIFINALNGFPGPYSRFVEDKLGNLKVLKMMEGEEDRTAYFKTVIGYCEPGKEPLVFPGVVEGKIAYEERGTGGFGYDPIFEYQGLTFGELGDTEKNKVSHRRRAVDEFLEWFTSKA.

8 to 13 (TGNKGK) contacts substrate. E37 and D66 together coordinate Mg(2+). Residue D66 is the Proton acceptor of the active site. Substrate is bound by residues S67, 142–145 (FGYD), K163, and 168–169 (HR).

It belongs to the HAM1 NTPase family. In terms of assembly, homodimer. Requires Mg(2+) as cofactor.

It catalyses the reaction XTP + H2O = XMP + diphosphate + H(+). The catalysed reaction is dITP + H2O = dIMP + diphosphate + H(+). It carries out the reaction ITP + H2O = IMP + diphosphate + H(+). Its function is as follows. Pyrophosphatase that catalyzes the hydrolysis of nucleoside triphosphates to their monophosphate derivatives, with a high preference for the non-canonical purine nucleotides XTP (xanthosine triphosphate), dITP (deoxyinosine triphosphate) and ITP. Seems to function as a house-cleaning enzyme that removes non-canonical purine nucleotides from the nucleotide pool, thus preventing their incorporation into DNA/RNA and avoiding chromosomal lesions. In Methanosarcina acetivorans (strain ATCC 35395 / DSM 2834 / JCM 12185 / C2A), this protein is dITP/XTP pyrophosphatase.